Consider the following 318-residue polypeptide: Protoheme IX farnesyltransferase (318 aa).

A run of 9 helical transmembrane segments spans residues 27–47, 52–72, 103–123, 124–144, 152–172, 179–199, 225–245, 248–268, and 288–308; these read IMML…GMTG, PAMA…AGAI, LTMG…ASNW, LAAA…TMWL, IVIG…AVTG, WILF…LSLL, ILVY…TGLG, IYGA…VAIL, and AFLF…VEHA.

Belongs to the UbiA prenyltransferase family. Protoheme IX farnesyltransferase subfamily. Interacts with CtaA.

Its subcellular location is the cell inner membrane. The catalysed reaction is heme b + (2E,6E)-farnesyl diphosphate + H2O = Fe(II)-heme o + diphosphate. Its pathway is porphyrin-containing compound metabolism; heme O biosynthesis; heme O from protoheme: step 1/1. Functionally, converts heme B (protoheme IX) to heme O by substitution of the vinyl group on carbon 2 of heme B porphyrin ring with a hydroxyethyl farnesyl side group. The protein is Protoheme IX farnesyltransferase of Hyphomonas neptunium (strain ATCC 15444).